We begin with the raw amino-acid sequence, 425 residues long: GTPase Obg (425 aa).

The Obg domain occupies 1–158 (MFKDYAKIHV…LWLELELKLL (158 aa)). The region spanning 159–329 (ADVGLVGFPN…LIYRTYRLLE (171 aa)) is the OBG-type G domain. GTP is bound by residues 165 to 172 (GFPNAGKS), 190 to 194 (FTTLE), 212 to 215 (DIPG), 282 to 285 (NKTD), and 310 to 312 (SAL). Mg(2+)-binding residues include serine 172 and threonine 192. Positions 341-421 (VPDERETDVT…IGRFEFEYSE (81 aa)) constitute an OCT domain.

This sequence belongs to the TRAFAC class OBG-HflX-like GTPase superfamily. OBG GTPase family. In terms of assembly, monomer. The cofactor is Mg(2+).

It is found in the cytoplasm. An essential GTPase which binds GTP, GDP and possibly (p)ppGpp with moderate affinity, with high nucleotide exchange rates and a fairly low GTP hydrolysis rate. Plays a role in control of the cell cycle, stress response, ribosome biogenesis and in those bacteria that undergo differentiation, in morphogenesis control. The chain is GTPase Obg from Desulforudis audaxviator (strain MP104C).